A 298-amino-acid chain; its full sequence is GTPase Era (298 aa).

Residues 3 to 170 form the Era-type G domain; that stretch reads KSGFVAILGR…IKLLTDNLEE (168 aa). Residues 11 to 18 form a G1 region; it reads GRPNVGKS. 11-18 is a GTP binding site; sequence GRPNVGKS. The tract at residues 37-41 is G2; it reads QTTRN. The G3 stretch occupies residues 58–61; it reads DTPG. Residues 58–62 and 120–123 each bind GTP; these read DTPGI and NKID. Residues 120–123 are G4; that stretch reads NKID. The segment at 149–151 is G5; sequence ISA. In terms of domain architecture, KH type-2 spans 201–279; that stretch reads TQQEVPHSVA…YLETWVKVKK (79 aa).

This sequence belongs to the TRAFAC class TrmE-Era-EngA-EngB-Septin-like GTPase superfamily. Era GTPase family. Monomer.

The protein localises to the cytoplasm. The protein resides in the cell membrane. In terms of biological role, an essential GTPase that binds both GDP and GTP, with rapid nucleotide exchange. Plays a role in 16S rRNA processing and 30S ribosomal subunit biogenesis and possibly also in cell cycle regulation and energy metabolism. This Streptococcus pyogenes serotype M2 (strain MGAS10270) protein is GTPase Era.